Reading from the N-terminus, the 76-residue chain is Exodeoxyribonuclease 7 small subunit (76 aa).

It belongs to the XseB family. As to quaternary structure, heterooligomer composed of large and small subunits.

The protein localises to the cytoplasm. It catalyses the reaction Exonucleolytic cleavage in either 5'- to 3'- or 3'- to 5'-direction to yield nucleoside 5'-phosphates.. Its function is as follows. Bidirectionally degrades single-stranded DNA into large acid-insoluble oligonucleotides, which are then degraded further into small acid-soluble oligonucleotides. This chain is Exodeoxyribonuclease 7 small subunit, found in Staphylococcus aureus (strain MRSA252).